A 208-amino-acid polypeptide reads, in one-letter code: Probable thymidylate kinase (208 aa).

Residue glycine 9–serine 16 coordinates ATP.

The protein belongs to the thymidylate kinase family.

The enzyme catalyses dTMP + ATP = dTDP + ADP. The protein is Probable thymidylate kinase of Thermococcus gammatolerans (strain DSM 15229 / JCM 11827 / EJ3).